The following is a 354-amino-acid chain: Lipoyl synthase, mitochondrial (354 aa).

Residues Cys91, Cys96, Cys102, Cys122, Cys126, Cys129, and Ser337 each coordinate [4Fe-4S] cluster. Positions 107-326 constitute a Radical SAM core domain; sequence DDSLATATIM…AEYSKKLGFL (220 aa).

Belongs to the radical SAM superfamily. Lipoyl synthase family. [4Fe-4S] cluster is required as a cofactor.

It localises to the mitochondrion. The enzyme catalyses [[Fe-S] cluster scaffold protein carrying a second [4Fe-4S](2+) cluster] + N(6)-octanoyl-L-lysyl-[protein] + 2 oxidized [2Fe-2S]-[ferredoxin] + 2 S-adenosyl-L-methionine + 4 H(+) = [[Fe-S] cluster scaffold protein] + N(6)-[(R)-dihydrolipoyl]-L-lysyl-[protein] + 4 Fe(3+) + 2 hydrogen sulfide + 2 5'-deoxyadenosine + 2 L-methionine + 2 reduced [2Fe-2S]-[ferredoxin]. The protein operates within protein modification; protein lipoylation via endogenous pathway; protein N(6)-(lipoyl)lysine from octanoyl-[acyl-carrier-protein]: step 2/2. Functionally, catalyzes the radical-mediated insertion of two sulfur atoms into the C-6 and C-8 positions of the octanoyl moiety bound to the lipoyl domains of lipoate-dependent enzymes, thereby converting the octanoylated domains into lipoylated derivatives. The sequence is that of Lipoyl synthase, mitochondrial from Caenorhabditis elegans.